A 348-amino-acid polypeptide reads, in one-letter code: 3-isopropylmalate dehydrogenase (348 aa).

76 to 87 provides a ligand contact to NAD(+); sequence GPKWTDPNNRPE. Residues R94, R104, R132, and D217 each coordinate substrate. Positions 217, 241, and 245 each coordinate Mg(2+). NAD(+) is bound at residue 275–287; the sequence is GSAPDIAGKNVAN.

Belongs to the isocitrate and isopropylmalate dehydrogenases family. LeuB type 1 subfamily. Homodimer. Mg(2+) serves as cofactor. The cofactor is Mn(2+).

The protein resides in the cytoplasm. The catalysed reaction is (2R,3S)-3-isopropylmalate + NAD(+) = 4-methyl-2-oxopentanoate + CO2 + NADH. The protein operates within amino-acid biosynthesis; L-leucine biosynthesis; L-leucine from 3-methyl-2-oxobutanoate: step 3/4. Functionally, catalyzes the oxidation of 3-carboxy-2-hydroxy-4-methylpentanoate (3-isopropylmalate) to 3-carboxy-4-methyl-2-oxopentanoate. The product decarboxylates to 4-methyl-2 oxopentanoate. The chain is 3-isopropylmalate dehydrogenase from Staphylococcus aureus (strain Mu50 / ATCC 700699).